Consider the following 552-residue polypeptide: Cochlin (552 aa).

The first 26 residues, 1-26 (MPSSRIPALCLGAWLLLLLLPRFARA), serve as a signal peptide directing secretion. The LCCL domain maps to 30-123 (VPIPVTCFTR…QMLSRWSASF (94 aa)). 2 disulfides stabilise this stretch: C36-C52 and C56-C76. N102 carries N-linked (GlcNAc...) asparagine glycosylation. Positions 129–161 (KSSTQEATGRAVSTAHPPSGKRLKKTPEKKTGN) are disordered. VWFA domains lie at 167–352 (DIAF…VQKL) and 369–539 (NIAF…VSDV). N223 carries N-linked (GlcNAc...) asparagine glycosylation.

In terms of assembly, monomer. May form homodimer. Interacts with type II collagen. Interacts with SLC44A2. Interacts with ANXA2. N-glycosylated. As to expression, expressed in inner ear structures.

Its subcellular location is the secreted. The protein resides in the extracellular space. In terms of biological role, plays a role in the control of cell shape and motility in the trabecular meshwork. This Mus musculus (Mouse) protein is Cochlin (Coch).